A 173-amino-acid polypeptide reads, in one-letter code: Plasmolipin (173 aa).

Residues 1-34 (MADFPGKVSTQTSSQEPQRSFAISSSVDMGFIKS) are Cytoplasmic-facing. Positions 31–160 (FIKSIPGILL…SSYFAYLGWR (130 aa)) constitute an MARVEL domain. A helical transmembrane segment spans residues 35 to 55 (IPGILLIAEIVVGLLVWTLIA). Over 56-67 (STPHYLIPALGW) the chain is Extracellular. Residues 68 to 88 (VLFVSITLWLLSIALLVILLL) traverse the membrane as a helical segment. At 89–98 (SLHQRLPSVP) the chain is on the cytoplasmic side. The chain crosses the membrane as a helical span at residues 99 to 119 (WPLVLLVFYSVAALLYLTAFL). Residues 120-138 (ANAATVPGGYYQGHLGASA) are Extracellular-facing. Residues 139-159 (FFGIVETLLYTASSYFAYLGW) form a helical membrane-spanning segment. Residues 160 to 173 (RGEGQNAAGSTVPV) lie on the Cytoplasmic side of the membrane.

It belongs to the MAL family. Forms oligomers. Expressed in the posterior midgut.

Its subcellular location is the cell membrane. The protein resides in the myelin membrane. It is found in the apical cell membrane. It localises to the recycling endosome membrane. The protein localises to the vesicle. Main component of the myelin sheath that plays an important role in myelin membrane biogenesis and myelination. Plays an essential function in apical endocytosis. Plays an important role by activating the Notch signaling pathway, which is essential for cell differentiation and results in correct patterning of the intestinal epithelium, particularly of the posterior gut absorptive cells. In Danio rerio (Zebrafish), this protein is Plasmolipin (pllp).